Here is a 791-residue protein sequence, read N- to C-terminus: Solute carrier family 26 member 9 (791 aa).

At 1–70 (MSQPRPRYVV…WLPKYKIKDY (70 aa)) the chain is on the cytoplasmic side. Residues 71 to 96 (IIPDLLGGLSGGSIQVPQGMAFALLA) traverse the membrane as a helical segment. Residues 97 to 99 (NLP) lie on the Extracellular side of the membrane. Residues 100 to 117 (AVNGLYSSFFPLLTYFFL) traverse the membrane as a helical segment. Residues 118–128 (GGVHQMVPGTF) are Cytoplasmic-facing. Residues 129 to 142 (AVISILVGNICLQL) traverse the membrane as a helical segment. Residues 143–171 (APESKFQVFNNATNESYVDTAAMEAERLH) are Extracellular-facing. A helical transmembrane segment spans residues 172 to 190 (VSATLACLTAIIQMGLGFM). Residues 191–202 (QFGFVAIYLSES) are Cytoplasmic-facing. Residues 203 to 224 (FIRGFMTAAGLQILISVLKYIF) traverse the membrane as a helical segment. The Extracellular portion of the chain corresponds to 225–235 (GLTIPSYTGPG). Positions 236–244 (SIVFTFIDI) form an intramembrane region, helical. The Extracellular segment spans residues 245-254 (CKNLPHTNIA). A helical transmembrane segment spans residues 255-273 (SLIFALISGAFLVLVKELN). The Cytoplasmic portion of the chain corresponds to 274–281 (ARYMHKIR). The chain crosses the membrane as a helical span at residues 282-297 (FPIPTEMIVVVVATAI). Over 298–327 (SGGCKMPKKYHMQIVGEIQRGFPTPVSPVV) the chain is Extracellular. The chain crosses the membrane as a helical span at residues 328 to 348 (SQWKDMIGTAFSLAIVSYVIN). The Cytoplasmic portion of the chain corresponds to 349-366 (LAMGRTLANKHGYDVDSN). Residues 367–382 (QEMIALGCSNFFGSFF) form a helical membrane-spanning segment. Residues 383-390 (KIHVICCA) are Extracellular-facing. Residues 391-400 (LSVTLAVDGA) form a helical membrane-spanning segment. The Cytoplasmic portion of the chain corresponds to 401-404 (GGKS). The chain crosses the membrane as a helical span at residues 405-423 (QVASLCVSLVVMITMLVLG). At 424 to 428 (IYLYP) the chain is on the extracellular side. The chain crosses the membrane as a helical span at residues 429–450 (LPKSVLGALIAVNLKNSLKQLT). The Cytoplasmic portion of the chain corresponds to 451–464 (DPYYLWRKSKLDCC). The helical transmembrane segment at 465–476 (IWVVSFLSSFFL) threads the bilayer. Serine 477 is a topological domain (extracellular). The chain crosses the membrane as a helical span at residues 478–489 (LPYGVAVGVAFS). The Cytoplasmic segment spans residues 490-791 (VLVVVFQTQF…MFHAETLTAL (302 aa)). The STAS domain maps to 519–737 (TYNRAQDIQG…PSIHDAVLFA (219 aa)). A disordered region spans residues 602-650 (FENAPPTDPNNNQTPANGTSVSYITFSPDSSSPAQSEPPASAEAPGEPS). Positions 610 to 626 (PNNNQTPANGTSVSYIT) are enriched in polar residues. Over residues 628-650 (SPDSSSPAQSEPPASAEAPGEPS) the composition is skewed to low complexity.

This sequence belongs to the SLC26A/SulP transporter (TC 2.A.53) family. Homodimer. Predominantly expressed in lung at the luminal side of the bronchiolar and alveolar epithelium of lung. To a lower extent, also expressed in pancreas and prostate.

The protein localises to the cell membrane. It localises to the endomembrane system. It catalyses the reaction chloride(in) = chloride(out). It carries out the reaction hydrogencarbonate(in) + chloride(out) = hydrogencarbonate(out) + chloride(in). Inhibited by ammonium and thiosulfate. Ion transporter that can act both as an ion channel and anion exchanger. Mainly acts as a chloride channel, which mediate uncoupled chloride anion transport in an alternate-access mechanism where a saturable binding site is alternately exposed to either one or the other side of the membrane. Also acts as a DIDS- and thiosulfate- sensitive anion exchanger the exchange of chloride for bicarbonate ions across the cell membrane. The polypeptide is Solute carrier family 26 member 9 (Homo sapiens (Human)).